Here is a 1144-residue protein sequence, read N- to C-terminus: Ribonucleoside-diphosphate reductase large subunit (1144 aa).

The disordered stretch occupies residues 1 to 33 (MANRPAASALAGARSPSERQEPREPEVAPPGGD). A compositionally biased stretch (basic and acidic residues) spans 16-26 (PSERQEPREPE). The RIP homotypic interaction motif (RHIM) signature appears at 55-75 (AYRISDSSFVQCGSNCSMIID). Residues 118-324 (SGPSATTSVG…TDPGYPVPLE (207 aa)) are disordered. The span at 119-132 (GPSATTSVGTQTSG) shows a compositional bias: polar residues. Pro residues predominate over residues 141-159 (TPEPQGPQAVPPPPPPPFP). Over residues 164–179 (CCARRDARGGAEKDVG) the composition is skewed to basic and acidic residues. Acidic residues predominate over residues 192-204 (SETEDSDSSDEDT). Low complexity-rich tracts occupy residues 205-216 (GSGSETLSRSSS) and 279-305 (GSATDPRASADSDSAAHAAAPQADVAP). Substrate contacts are provided by residues Thr573, 588–589 (SC), Gly619, 798–802 (NLCTE), and 975–979 (PTAAS). Cys589 and Cys815 are joined by a disulfide. The active-site Proton acceptor is Asn798. The active-site Cysteine radical intermediate is the Cys800. The active-site Proton acceptor is the Glu802.

It belongs to the ribonucleoside diphosphate reductase large chain family. In terms of assembly, heterotetramer composed of a homodimer of the large subunit (R1) and a homodimer of the small subunit (R2). Larger multisubunit protein complex are also active, composed of (R1)n(R2)n. May self-assemble (via RIP homotypic interaction motif/RHIM) into homomeric fibrillar amyloid structures. Interacts (via RHIM) with human RIPK1 (via RHIM). Interacts (via RHIM) with human RIPK3 (via RHIM). May interact (via RHIM) with human ZBP1 (via RHIM). Interacts (via C-terminus) with host CASP8.

The catalysed reaction is a 2'-deoxyribonucleoside 5'-diphosphate + [thioredoxin]-disulfide + H2O = a ribonucleoside 5'-diphosphate + [thioredoxin]-dithiol. Functionally, ribonucleoside-diphosphate reductase holoenzyme that provides the precursors necessary for viral DNA synthesis. Allows virus growth in non-dividing cells, as well as reactivation from latency in infected hosts. Catalyzes the biosynthesis of deoxyribonucleotides from the corresponding ribonucleotides. The N-terminal region confers antiapoptotic activity in differentiated cells such as neurons and is important for viral reactivation to increase neural survivability. Prevents host necroptosis by targeting host RIPK1 and RIPK3, thereby hampering the formation of necroptotic RIPK1-RIPK3 complexes. May form hetero-amyloid structures with host proteins RIPK3 or ZBP1, thereby preventing RIPK3- and ZBP1-mediated necroptosis. In addition, inhibits extrinsic apoptosis by targeting host CASP8. The sequence is that of Ribonucleoside-diphosphate reductase large subunit from Homo sapiens (Human).